We begin with the raw amino-acid sequence, 452 residues long: Pup--protein ligase (452 aa).

A Mg(2+)-binding site is contributed by glutamate 9. Position 53 (arginine 53) interacts with ATP. Residue tyrosine 55 participates in Mg(2+) binding. Residue aspartate 57 is the Proton acceptor of the active site. Mg(2+) is bound at residue glutamate 63. 2 residues coordinate ATP: threonine 66 and tryptophan 419.

It belongs to the Pup ligase/Pup deamidase family. Pup-conjugating enzyme subfamily.

It carries out the reaction ATP + [prokaryotic ubiquitin-like protein]-L-glutamate + [protein]-L-lysine = ADP + phosphate + N(6)-([prokaryotic ubiquitin-like protein]-gamma-L-glutamyl)-[protein]-L-lysine.. Its pathway is protein degradation; proteasomal Pup-dependent pathway. It participates in protein modification; protein pupylation. In terms of biological role, catalyzes the covalent attachment of the prokaryotic ubiquitin-like protein modifier Pup to the proteasomal substrate proteins, thereby targeting them for proteasomal degradation. This tagging system is termed pupylation. The ligation reaction involves the side-chain carboxylate of the C-terminal glutamate of Pup and the side-chain amino group of a substrate lysine. This is Pup--protein ligase from Mycolicibacterium gilvum (strain PYR-GCK) (Mycobacterium gilvum (strain PYR-GCK)).